Consider the following 286-residue polypeptide: Bifunctional protein FolD (286 aa).

Residues 165 to 167 (GRS), serine 190, and valine 231 contribute to the NADP(+) site.

Belongs to the tetrahydrofolate dehydrogenase/cyclohydrolase family. In terms of assembly, homodimer.

The enzyme catalyses (6R)-5,10-methylene-5,6,7,8-tetrahydrofolate + NADP(+) = (6R)-5,10-methenyltetrahydrofolate + NADPH. It catalyses the reaction (6R)-5,10-methenyltetrahydrofolate + H2O = (6R)-10-formyltetrahydrofolate + H(+). It participates in one-carbon metabolism; tetrahydrofolate interconversion. In terms of biological role, catalyzes the oxidation of 5,10-methylenetetrahydrofolate to 5,10-methenyltetrahydrofolate and then the hydrolysis of 5,10-methenyltetrahydrofolate to 10-formyltetrahydrofolate. This Bacillus cereus (strain ATCC 14579 / DSM 31 / CCUG 7414 / JCM 2152 / NBRC 15305 / NCIMB 9373 / NCTC 2599 / NRRL B-3711) protein is Bifunctional protein FolD.